The following is a 105-amino-acid chain: Protein SMALL AUXIN UP-REGULATED RNA 16 (105 aa).

The protein belongs to the ARG7 family. In terms of tissue distribution, expressed in etiolated hypocotyls, cotyledons, leaves, flowers and siliques.

The protein localises to the cell membrane. Functionally, provide a mechanistic link between auxin and plasma membrane H(+)-ATPases (PM H(+)-ATPases, e.g. AHA1 and AHA2), and triggers PM H(+)-ATPases activity by promoting phosphorylation of their C-terminal autoinhibitory domain as a result of PP2C-D subfamily of type 2C phosphatases inhibition, thus leading to the acidification of the apoplast and the facilitation of solutes and water uptake to drive cell expansion. Triggers plant growth probably by promoting cell elongation. Regulates branch angles and bending. The protein is Protein SMALL AUXIN UP-REGULATED RNA 16 of Arabidopsis thaliana (Mouse-ear cress).